The chain runs to 308 residues: Spermidine synthase 2 (308 aa).

In terms of domain architecture, PABS spans 17–254 (PGWFSEISPL…GVIGFMLCST (238 aa)). Glutamine 48 contacts S-adenosyl 3-(methylsulfanyl)propylamine. Residue tyrosine 78 participates in putrescine binding. S-adenosyl 3-(methylsulfanyl)propylamine is bound by residues glutamine 79, aspartate 103, glutamate 123, 154 to 155 (DG), and aspartate 173. Aspartate 173 functions as the Proton acceptor in the catalytic mechanism. Putrescine contacts are provided by residues 173–176 (DSSD) and tyrosine 242.

Belongs to the spermidine/spermine synthase family.

The enzyme catalyses S-adenosyl 3-(methylsulfanyl)propylamine + putrescine = S-methyl-5'-thioadenosine + spermidine + H(+). It participates in amine and polyamine biosynthesis; spermidine biosynthesis; spermidine from putrescine: step 1/1. In Hyoscyamus niger (Black henbane), this protein is Spermidine synthase 2.